The chain runs to 83 residues: Small ribosomal subunit protein bS16 (83 aa).

Belongs to the bacterial ribosomal protein bS16 family.

The chain is Small ribosomal subunit protein bS16 from Verminephrobacter eiseniae (strain EF01-2).